We begin with the raw amino-acid sequence, 353 residues long: 4-hydroxy-3-methylbut-2-en-1-yl diphosphate synthase (flavodoxin) (353 aa).

4 residues coordinate [4Fe-4S] cluster: Cys-268, Cys-271, Cys-303, and Glu-310.

This sequence belongs to the IspG family. [4Fe-4S] cluster serves as cofactor.

It catalyses the reaction (2E)-4-hydroxy-3-methylbut-2-enyl diphosphate + oxidized [flavodoxin] + H2O + 2 H(+) = 2-C-methyl-D-erythritol 2,4-cyclic diphosphate + reduced [flavodoxin]. The protein operates within isoprenoid biosynthesis; isopentenyl diphosphate biosynthesis via DXP pathway; isopentenyl diphosphate from 1-deoxy-D-xylulose 5-phosphate: step 5/6. Functionally, converts 2C-methyl-D-erythritol 2,4-cyclodiphosphate (ME-2,4cPP) into 1-hydroxy-2-methyl-2-(E)-butenyl 4-diphosphate. The sequence is that of 4-hydroxy-3-methylbut-2-en-1-yl diphosphate synthase (flavodoxin) from Ruminiclostridium cellulolyticum (strain ATCC 35319 / DSM 5812 / JCM 6584 / H10) (Clostridium cellulolyticum).